The following is a 319-amino-acid chain: Acetylglutamate kinase (319 aa).

Substrate-binding positions include 74–75 (GG), R96, and N210.

It belongs to the acetylglutamate kinase family. ArgB subfamily.

Its subcellular location is the cytoplasm. The catalysed reaction is N-acetyl-L-glutamate + ATP = N-acetyl-L-glutamyl 5-phosphate + ADP. The protein operates within amino-acid biosynthesis; L-arginine biosynthesis; N(2)-acetyl-L-ornithine from L-glutamate: step 2/4. Functionally, catalyzes the ATP-dependent phosphorylation of N-acetyl-L-glutamate. The sequence is that of Acetylglutamate kinase from Pseudarthrobacter chlorophenolicus (strain ATCC 700700 / DSM 12829 / CIP 107037 / JCM 12360 / KCTC 9906 / NCIMB 13794 / A6) (Arthrobacter chlorophenolicus).